A 164-amino-acid polypeptide reads, in one-letter code: Mediator of RNA polymerase II transcription subunit 21 (164 aa).

A disordered region spans residues Ala49–Phe81. Residues Ala53–Phe81 show a composition bias toward polar residues. The stretch at Glu114–Lys146 forms a coiled coil.

This sequence belongs to the Mediator complex subunit 21 family. As to quaternary structure, component of the Mediator complex.

It localises to the nucleus. Functionally, component of the Mediator complex, a coactivator involved in the regulated transcription of nearly all RNA polymerase II-dependent genes. Mediator functions as a bridge to convey information from gene-specific regulatory proteins to the basal RNA polymerase II transcription machinery. Mediator is recruited to promoters by direct interactions with regulatory proteins and serves as a scaffold for the assembly of a functional preinitiation complex with RNA polymerase II and the general transcription factors. The polypeptide is Mediator of RNA polymerase II transcription subunit 21 (SRB7) (Scheffersomyces stipitis (strain ATCC 58785 / CBS 6054 / NBRC 10063 / NRRL Y-11545) (Yeast)).